Here is a 285-residue protein sequence, read N- to C-terminus: Type II secretion system protein C (285 aa).

Over methionine 1–histidine 27 the chain is Cytoplasmic. The chain crosses the membrane as a helical span at residues isoleucine 28–tryptophan 46. At lysine 47–glutamate 285 the chain is on the periplasmic side.

Belongs to the GSP C family.

The protein resides in the cell inner membrane. Functionally, involved in a type II secretion system (T2SS, formerly general secretion pathway, GSP) for the export of proteins. Required for the translocation of pullulanase. The polypeptide is Type II secretion system protein C (pulC) (Klebsiella pneumoniae).